The following is a 1402-amino-acid chain: DNA-directed RNA polymerase subunit beta' (1402 aa).

Positions 71, 73, 86, and 89 each coordinate Zn(2+). Residues aspartate 462, aspartate 464, and aspartate 466 each coordinate Mg(2+). Residues cysteine 811, cysteine 885, cysteine 892, and cysteine 895 each coordinate Zn(2+). Residues 1379–1402 (RKGTGAGSANQMLQDMTDQVPAAE) are disordered. Residues 1385–1395 (GSANQMLQDMT) are compositionally biased toward polar residues.

This sequence belongs to the RNA polymerase beta' chain family. As to quaternary structure, the RNAP catalytic core consists of 2 alpha, 1 beta, 1 beta' and 1 omega subunit. When a sigma factor is associated with the core the holoenzyme is formed, which can initiate transcription. Requires Mg(2+) as cofactor. Zn(2+) is required as a cofactor.

The enzyme catalyses RNA(n) + a ribonucleoside 5'-triphosphate = RNA(n+1) + diphosphate. Functionally, DNA-dependent RNA polymerase catalyzes the transcription of DNA into RNA using the four ribonucleoside triphosphates as substrates. In Agrobacterium fabrum (strain C58 / ATCC 33970) (Agrobacterium tumefaciens (strain C58)), this protein is DNA-directed RNA polymerase subunit beta'.